Here is a 189-residue protein sequence, read N- to C-terminus: Urease accessory protein UreF (189 aa).

The protein belongs to the UreF family. In terms of assembly, ureD, UreF and UreG form a complex that acts as a GTP-hydrolysis-dependent molecular chaperone, activating the urease apoprotein by helping to assemble the nickel containing metallocenter of UreC. The UreE protein probably delivers the nickel.

Its subcellular location is the cytoplasm. Its function is as follows. Required for maturation of urease via the functional incorporation of the urease nickel metallocenter. The chain is Urease accessory protein UreF from Staphylococcus xylosus.